A 1200-amino-acid chain; its full sequence is Chromosome partition protein Smc (1200 aa).

32–39 (PNGCGKSN) lines the ATP pocket. Coiled coils occupy residues 171–219 (VTKY…AEKY) and 252–342 (LENL…MSEA). Positions 528-644 (QGIFGLVADV…QDVATARAWT (117 aa)) constitute an SMC hinge domain. Coiled coils occupy residues 679-706 (ALQK…ILTR) and 735-762 (LASQ…LEVE). The interval 763–795 (EGQLTQSHQALEHEEEASRGEVAHGQADREGRE) is disordered. Basic and acidic residues predominate over residues 772-795 (ALEHEEEASRGEVAHGQADREGRE). Residues 1002 to 1039 (HAELSKRYDFLTAQKKDLQSSIEQLKEAIQRIDATSRE) adopt a coiled-coil conformation.

It belongs to the SMC family. Homodimer. Probably forms the Structural Maintenance of Chromosome (SMC) condensin-like complex with ScpA and ScpB.

Its subcellular location is the cytoplasm. Functionally, a conditionally essential component of the chromosome segregation machinery. Required for chromosome condensation and partitioning. Important for positioning of ParB-parS complexes (ori of replication) and of the ter replication site, as well as for segration of the ParB-parS complex and thus chromosome segregation. May act via the formation of a condensin-like complex containing Smc, ScpA and ScpB that pulls DNA away from mid-cell into both cell halves. This Myxococcus xanthus (strain DK1622) protein is Chromosome partition protein Smc.